A 170-amino-acid polypeptide reads, in one-letter code: Adenine phosphoribosyltransferase (170 aa).

The protein belongs to the purine/pyrimidine phosphoribosyltransferase family. Homodimer.

It localises to the cytoplasm. The enzyme catalyses AMP + diphosphate = 5-phospho-alpha-D-ribose 1-diphosphate + adenine. Its pathway is purine metabolism; AMP biosynthesis via salvage pathway; AMP from adenine: step 1/1. Its function is as follows. Catalyzes a salvage reaction resulting in the formation of AMP, that is energically less costly than de novo synthesis. The polypeptide is Adenine phosphoribosyltransferase (Thermotoga petrophila (strain ATCC BAA-488 / DSM 13995 / JCM 10881 / RKU-1)).